The chain runs to 394 residues: Dihydroorotase (394 aa).

Zn(2+) is bound by residues histidine 15, histidine 17, lysine 98, histidine 135, histidine 175, and aspartate 245. N6-carboxylysine is present on lysine 98.

Belongs to the metallo-dependent hydrolases superfamily. DHOase family. Class II DHOase subfamily. It depends on Zn(2+) as a cofactor.

It carries out the reaction (S)-dihydroorotate + H2O = N-carbamoyl-L-aspartate + H(+). Its pathway is pyrimidine metabolism; UMP biosynthesis via de novo pathway; (S)-dihydroorotate from bicarbonate: step 3/3. The sequence is that of Dihydroorotase (PYR3) from Mycosarcoma maydis (Corn smut fungus).